A 176-amino-acid polypeptide reads, in one-letter code: Nucleoside triphosphate/diphosphate phosphatase (176 aa).

R23 serves as the catalytic Proton donor. 6 residues coordinate Mg(2+): N87, D103, D105, D107, D120, and E123.

This sequence belongs to the Ntdp family. Mg(2+) serves as cofactor.

It carries out the reaction a ribonucleoside 5'-triphosphate + H2O = a ribonucleoside 5'-diphosphate + phosphate + H(+). It catalyses the reaction a ribonucleoside 5'-diphosphate + H2O = a ribonucleoside 5'-phosphate + phosphate + H(+). Has nucleoside phosphatase activity towards nucleoside triphosphates and nucleoside diphosphates. This Bacillus subtilis (strain 168) protein is Nucleoside triphosphate/diphosphate phosphatase (ygaC).